The primary structure comprises 1140 residues: MSYNYVVTAQKPTAVNGCVTGHFTSAEDLNLLIAKNTRLEIYVVTAEGLRPVKEVGMYGKIAVMELFRPKGESKDLLFILTAKYNACILEYKQSGESIDIITRAHGNVQDRIGRPSETGIIGIIDPECRMIGLRLYDGLFKVIPLDRDNKELKAFNIRLEELHVIDVKFLYGCQAPTICFVYQDPQGRHVKTYEVSLREKEFNKGPWKQENVEAEASMVIAVPEPFGGAIIIGQESITYHNGDKYLAIAPPIIKQSTIVCHNRVDPNGSRYLLGDMEGRLFMLLLEKEEQMDGTVTLKDLRVELLGETSIAECLTYLDNGVVFVGSRLGDSQLVKLNVDSNEQGSYVVAMETFTNLGPIVDMCVVDLERQGQGQLVTCSGAFKEGSLRIIRNGIGIHEHASIDLPGIKGLWPLRSDPNRETDDTLVLSFVGQTRVLMLNGEEVEETELMGFVDDQQTFFCGNVAHQQLIQITSASVRLVSQEPKALVSEWKEPQGKNISVASCNSSQVVVAVGRALYYLQIHPQELRQISHTEMEHEVACLDITPLGDSNGMSPLCAIGLWTDISARIAKLPSFELLHKEMLGGEIIPRSILMTTFESSHYLLCALGDGALFYFGLNIETGLLSDRKKVTLGTQPTVLRTFRSLSTTNVFACSDRPTVIYSSNHKLVFSNVNLKEVNYMCPLNSDGYPDSLALANNSTLTIGTIDEIQKLHIRTVPLYESPRKICYQEVSQCFGVLSSRIEVQDTSGGTTALRPSASTQALSSSVSSSKLFSSSTAPHETSFGEEVEVHNLLIIDQHTFEVLHAHQFLQNEYALSLVSCKLGKDPNTYFIVGTAMVYPEEAEPKQGRIVVFQYSDGKLQTVAEKEVKGAVYSMVEFNGKLLASINSTVRLYEWTTEKELRTECNHYNNIMALYLKTKGDFILVGDLMRSVLLLAYKPMEGNFEEIARDFNPNWMSAVEILDDDNFLGAENAFNLFVCQKDSAATTDEERQHLQEVGLFHLGEFVNVFCHGSLVMQNLGETSTPTQGSVLFGTVNGMIGLVTSLSESWYNLLLDMQNRLNKVIKSVGKIEHSFWRSFHTERKTEPATGFIDGDLIESFLDISRPKMQEVVANLQYDDGSGMKREATADDLIKVVEELTRIH.

The residue at position 2 (Ser-2) is an N-acetylserine. The interval 2-768 (SYNYVVTAQK…QALSSSVSSS (767 aa)) is interaction with CDT1. Positions 13–356 (TAVNGCVTGH…VVAMETFTNL (344 aa)) are WD repeat beta-propeller A. The interval 391 to 708 (RNGIGIHEHA…LTIGTIDEIQ (318 aa)) is WD repeat beta-propeller B; Interaction with CUL4A. Residues 709-1043 (KLHIRTVPLY…NGMIGLVTSL (335 aa)) are WD repeat beta-propeller C. Residues 771–1140 (FSSSTAPHET…KVVEELTRIH (370 aa)) form an interaction with CDT1 and CUL4A region. Position 1067 is an N6-acetyllysine (Lys-1067). Lys-1121 participates in a covalent cross-link: Glycyl lysine isopeptide (Lys-Gly) (interchain with G-Cter in SUMO2). Phosphothreonine is present on Thr-1125.

Belongs to the DDB1 family. Component of the UV-DDB complex which includes DDB1 and DDB2; the heterodimer dimerizes to give rise to a heterotetramer when bound to damaged DNA. The UV-DDB complex interacts with monoubiquitinated histone H2A and binds to XPC via the DDB2 subunit. Component of numerous DCX (DDB1-CUL4-X-box) E3 ubiquitin-protein ligase complexes which consist of a core of DDB1, CUL4A or CUL4B and RBX1. DDB1 may recruit specific substrate targeting subunits to the DCX complex. These substrate targeting subunits are generally known as DCAF (DDB1- and CUL4-associated factor) or CDW (CUL4-DDB1-associated WD40-repeat) proteins. Interacts with AMBRA1, ATG16L1, BTRC, CRBN, DCAF1, DCAF4, DCAF5, DCAF6, DCAF7, DCAF8, DCAF9, DCAF10, DCAF11, DCAF12, DCAF15, DCAF16, DCAF17, DDA1, DET1, DTL, ERCC8, FBXW5, FBXW8, GRWD1, KATNB1, NLE1, NUP43, PAFAH1B1, PHIP, PWP1, RBBP4, RBBP5, RBBP7, COP1, SNRNP40, DCAF1, WDR5, WDR5B, WDR12, WDR26, WDR39, WDR42, WDR53, WDR59, WDR61, WSB1, WSB2, LRWD1 and WDTC1. DCX complexes may associate with the COP9 signalosome, and this inhibits the E3 ubiquitin-protein ligase activity of the complex. Interacts with NF2, TSC1 and TSC2. Interacts with AGO1 and AGO2. Associates with the E3 ligase complex containing DYRK2, EDD/UBR5, DDB1 and DCAF1 proteins (EDVP complex). Interacts directly with DYRK2. DCX(DTL) complex interacts with FBXO11; does not ubiquitinate and degradate FBXO11. Interacts with TRPC4AP. Interacts with CRY1 and CRY2. The DDB1-CUL4A complex interacts with CRY1. May also interact with DCUN1D1, DCUN1D2, DCUN1D3 and DCUN1D5. Component of the DCX(DCAF13) E3 ubiquitin ligase complex, at least composed of CUL4 (CUL4A or CUL4B), DDB1, DCAF13 and RBX1. Interacts with DCAF13 (via WD40 domain). In terms of processing, phosphorylated by ABL1. Post-translationally, ubiquitinated by CUL4A. Subsequently degraded by ubiquitin-dependent proteolysis. Acetylated, promoting interaction with CUL4 (CUL4A or CUL4B) and subsequent formation of DCX (DDB1-CUL4-X-box) E3 ubiquitin-protein ligase complexes. Deacetylation by SIRT7 impairs the interaction with CUL4 (CUL4A or CUL4B) and formation of DCX (DDB1-CUL4-X-box) E3 ubiquitin-protein ligase complexes.

It localises to the cytoplasm. It is found in the nucleus. It functions in the pathway protein modification; protein ubiquitination. Protein, which is both involved in DNA repair and protein ubiquitination, as part of the UV-DDB complex and DCX (DDB1-CUL4-X-box) complexes, respectively. Core component of the UV-DDB complex (UV-damaged DNA-binding protein complex), a complex that recognizes UV-induced DNA damage and recruit proteins of the nucleotide excision repair pathway (the NER pathway) to initiate DNA repair. The UV-DDB complex preferentially binds to cyclobutane pyrimidine dimers (CPD), 6-4 photoproducts (6-4 PP), apurinic sites and short mismatches. Also functions as a component of numerous distinct DCX (DDB1-CUL4-X-box) E3 ubiquitin-protein ligase complexes which mediate the ubiquitination and subsequent proteasomal degradation of target proteins. The functional specificity of the DCX E3 ubiquitin-protein ligase complex is determined by the variable substrate recognition component recruited by DDB1. DCX(DDB2) (also known as DDB1-CUL4-ROC1, CUL4-DDB-ROC1 and CUL4-DDB-RBX1) may ubiquitinate histone H2A, histone H3 and histone H4 at sites of UV-induced DNA damage. The ubiquitination of histones may facilitate their removal from the nucleosome and promote subsequent DNA repair. DCX(DDB2) also ubiquitinates XPC, which may enhance DNA-binding by XPC and promote NER. DCX(DTL) plays a role in PCNA-dependent polyubiquitination of CDT1 and MDM2-dependent ubiquitination of TP53 in response to radiation-induced DNA damage and during DNA replication. DCX(ERCC8) (the CSA complex) plays a role in transcription-coupled repair (TCR). The DDB1-CUL4A-DTL E3 ligase complex regulates the circadian clock function by mediating the ubiquitination and degradation of CRY1. DDB1-mediated CRY1 degradation promotes FOXO1 protein stability and FOXO1-mediated gluconeogenesis in the liver. By acting on TET dioxygenses, essential for oocyte maintenance at the primordial follicle stage, hence essential for female fertility. Maternal factor required for proper zygotic genome activation and genome reprogramming. The protein is DNA damage-binding protein 1 (DDB1) of Bos taurus (Bovine).